The chain runs to 1262 residues: Isoleucine--tRNA ligase, cytoplasmic (1262 aa).

The residue at position 1 (Met1) is an N-acetylmethionine. The short motif at 48-58 is the 'HIGH' region element; sequence PFATGLPHYGH. The 'KMSKS' region motif lies at 600–604; sequence KMSKR. An ATP-binding site is contributed by Lys603. Ser1047 and Ser1049 each carry phosphoserine. Thr1058 is subject to Phosphothreonine.

The protein belongs to the class-I aminoacyl-tRNA synthetase family. In terms of assembly, part of a multisubunit complex that groups tRNA ligases for Arg (RARS1), Asp (DARS1), Gln (QARS1), Ile (IARS1), Leu (LARS1), Lys (KARS1), Met (MARS1) the bifunctional ligase for Glu and Pro (EPRS1) and the auxiliary subunits AIMP1/p43, AIMP2/p38 and EEF1E1/p18. Expressed in liver and muscle (at protein level).

The protein resides in the cytoplasm. It localises to the cytosol. The enzyme catalyses tRNA(Ile) + L-isoleucine + ATP = L-isoleucyl-tRNA(Ile) + AMP + diphosphate. In terms of biological role, catalyzes the specific attachment of an amino acid to its cognate tRNA in a 2 step reaction: the amino acid (AA) is first activated by ATP to form AA-AMP and then transferred to the acceptor end of the tRNA. The protein is Isoleucine--tRNA ligase, cytoplasmic of Homo sapiens (Human).